The following is a 167-amino-acid chain: uncharacterized protein (167 aa).

The interval 140-167 (SSEEKKKKKKKKKEKSLHTEREKKKKKF) is disordered. Positions 145–154 (KKKKKKKKEK) are enriched in basic residues.

This is an uncharacterized protein from Saccharomyces cerevisiae (strain ATCC 204508 / S288c) (Baker's yeast).